Consider the following 351-residue polypeptide: Photosystem II D2 protein (351 aa).

Residues 39–59 (TAYLAIGGWLTGTTFVTSWYT) form a helical membrane-spanning segment. Histidine 116 is a binding site for chlorophyll a. Residues 123–139 (GFMLRQFEIARLVGIRP) form a helical membrane-spanning segment. Pheophytin a-binding residues include glutamine 128 and asparagine 141. The chain crosses the membrane as a helical span at residues 151 to 164 (VFVSVFLMYPLGQS). Residue histidine 196 participates in chlorophyll a binding. Residues 206–226 (GALLCAIHGATVENTLFEDGE) traverse the membrane as a helical segment. Residues histidine 213 and phenylalanine 260 each contribute to the a plastoquinone site. Residue histidine 213 coordinates Fe cation. Histidine 267 contributes to the Fe cation binding site. Residues 277–293 (GLWTSSIGIIGLALNLR) form a helical membrane-spanning segment.

Belongs to the reaction center PufL/M/PsbA/D family. In terms of assembly, PSII is composed of 1 copy each of membrane proteins PsbA, PsbB, PsbC, PsbD, PsbE, PsbF, PsbH, PsbI, PsbJ, PsbK, PsbL, PsbM, PsbT, PsbX, PsbY, PsbZ, Psb30/Ycf12, peripheral proteins PsbO, CyanoQ (PsbQ), PsbU, PsbV and a large number of cofactors. It forms dimeric complexes. The D1/D2 heterodimer binds P680, chlorophylls that are the primary electron donor of PSII, and subsequent electron acceptors. It shares a non-heme iron and each subunit binds pheophytin, quinone, additional chlorophylls, carotenoids and lipids. There is also a Cl(-1) ion associated with D1 and D2, which is required for oxygen evolution. The PSII complex binds additional chlorophylls, carotenoids and specific lipids. serves as cofactor.

It is found in the cellular thylakoid membrane. It catalyses the reaction 2 a plastoquinone + 4 hnu + 2 H2O = 2 a plastoquinol + O2. Functionally, photosystem II (PSII) is a light-driven water:plastoquinone oxidoreductase that uses light energy to abstract electrons from H(2)O, generating O(2) and a proton gradient subsequently used for ATP formation. It consists of a core antenna complex that captures photons, and an electron transfer chain that converts photonic excitation into a charge separation. The D1/D2 (PsbA/PsbD) reaction center heterodimer binds P680, the primary electron donor of PSII as well as several subsequent electron acceptors. D2 is needed for assembly of a stable PSII complex. The polypeptide is Photosystem II D2 protein (Parasynechococcus marenigrum (strain WH8102)).